Here is a 139-residue protein sequence, read N- to C-terminus: uncharacterized protein (139 aa).

Positions 54-75 are disordered; it reads NSLHRHGDQAWGKHRRQNSLKS.

This is an uncharacterized protein from Homo sapiens (Human).